Reading from the N-terminus, the 248-residue chain is Probable transcriptional regulatory protein Ccel_0181 (248 aa).

The protein belongs to the TACO1 family.

Its subcellular location is the cytoplasm. This is Probable transcriptional regulatory protein Ccel_0181 from Ruminiclostridium cellulolyticum (strain ATCC 35319 / DSM 5812 / JCM 6584 / H10) (Clostridium cellulolyticum).